A 664-amino-acid chain; its full sequence is DNA ligase (664 aa).

NAD(+)-binding positions include 31–35 (DSTYD), 80–81 (SL), and glutamate 110. Catalysis depends on lysine 112, which acts as the N6-AMP-lysine intermediate. Residues arginine 133, glutamate 167, lysine 282, and lysine 306 each coordinate NAD(+). Zn(2+) contacts are provided by cysteine 400, cysteine 403, cysteine 418, and cysteine 423. Positions 583 to 664 (QSNAPLAGKT…LLEELAKYEG (82 aa)) constitute a BRCT domain.

Belongs to the NAD-dependent DNA ligase family. LigA subfamily. It depends on Mg(2+) as a cofactor. Mn(2+) is required as a cofactor.

The catalysed reaction is NAD(+) + (deoxyribonucleotide)n-3'-hydroxyl + 5'-phospho-(deoxyribonucleotide)m = (deoxyribonucleotide)n+m + AMP + beta-nicotinamide D-nucleotide.. In terms of biological role, DNA ligase that catalyzes the formation of phosphodiester linkages between 5'-phosphoryl and 3'-hydroxyl groups in double-stranded DNA using NAD as a coenzyme and as the energy source for the reaction. It is essential for DNA replication and repair of damaged DNA. The polypeptide is DNA ligase (Exiguobacterium sibiricum (strain DSM 17290 / CCUG 55495 / CIP 109462 / JCM 13490 / 255-15)).